Consider the following 379-residue polypeptide: Heme chaperone HemW (379 aa).

The region spanning 1-233 (MKSAYIHIPF…MSKMEAHGIH (233 aa)) is the Radical SAM core domain. Tyrosine 5 is an S-adenosyl-L-methionine binding site. Residues cysteine 11, cysteine 15, and cysteine 18 each coordinate [4Fe-4S] cluster. S-adenosyl-L-methionine is bound by residues glycine 60, 61 to 62 (GT), glutamate 94, glutamine 121, arginine 133, and aspartate 158.

Belongs to the anaerobic coproporphyrinogen-III oxidase family. HemW subfamily. [4Fe-4S] cluster is required as a cofactor.

It is found in the cytoplasm. Probably acts as a heme chaperone, transferring heme to an unknown acceptor. Binds one molecule of heme per monomer, possibly covalently. Binds 1 [4Fe-4S] cluster. The cluster is coordinated with 3 cysteines and an exchangeable S-adenosyl-L-methionine. The chain is Heme chaperone HemW from Bacillus subtilis (strain 168).